A 637-amino-acid chain; its full sequence is Biosynthetic arginine decarboxylase (637 aa).

K101 is modified (N6-(pyridoxal phosphate)lysine). 286-296 contributes to the substrate binding site; sequence FDVGGGLAVDY.

Belongs to the Orn/Lys/Arg decarboxylase class-II family. SpeA subfamily. Mg(2+) serves as cofactor. It depends on pyridoxal 5'-phosphate as a cofactor.

It catalyses the reaction L-arginine + H(+) = agmatine + CO2. The protein operates within amine and polyamine biosynthesis; agmatine biosynthesis; agmatine from L-arginine: step 1/1. Functionally, catalyzes the biosynthesis of agmatine from arginine. This is Biosynthetic arginine decarboxylase from Shewanella baltica (strain OS195).